An 830-amino-acid polypeptide reads, in one-letter code: uncharacterized protein (830 aa).

Disordered regions lie at residues 1 to 28, 70 to 147, and 186 to 210; these read MGVQLKLDPNSKNWLRQPDQQPIQDSIC, RRAN…GNFA, and AASPTVSFSPASTSENLTPTSSKSL. Polar residues predominate over residues 10–27; it reads NSKNWLRQPDQQPIQDSI. 2 stretches are compositionally biased toward low complexity: residues 100–130 and 186–199; these read QKSSNSRKSIRSQSRSRSSSVGSDSQASIQS and AASPTVSFSPASTS. A compositionally biased stretch (polar residues) spans 200–210; the sequence is ENLTPTSSKSL. The next 10 helical transmembrane spans lie at 505–525, 529–549, 551–571, 584–604, 622–642, 659–679, 691–711, 715–735, 740–760, and 802–822; these read WLVAFMHGVASASILPVVYGG, DMLIGFVLGLLLGIFRVYINP, FFLFDSLFEVIISIILSFLGR, FCFAALVEGAITLILPGYVVF, MLYAVIFSLFLSFGITIGSAL, IIAVSPYWYILLIPIFTLSLL, IQMFVACCGYVVYYFSSLHFG, ISSAIGSFAVGCLGNMYSHFI, FAVVLPAIFVLVPSGFAAQGG, and IAIGIAIGFLASSLTVYPFFG.

Belongs to the ThrE exporter (TC 2.A.79) family.

It localises to the cell membrane. The protein localises to the cell tip. This is an uncharacterized protein from Schizosaccharomyces pombe (strain 972 / ATCC 24843) (Fission yeast).